The chain runs to 309 residues: Protein FdhE homolog (309 aa).

Belongs to the FdhE family.

The protein localises to the cytoplasm. Necessary for formate dehydrogenase activity. The chain is Protein FdhE homolog from Yersinia pestis bv. Antiqua (strain Antiqua).